The following is a 406-amino-acid chain: Synaptic vesicle membrane protein VAT-1 homolog (406 aa).

The tract at residues 1 to 57 is disordered; it reads MSAEREAAEAATVAAATEAGAETGTGAGEGAPSQPPTVEVASDPQPPPAPEASASAS. An N-acetylserine modification is found at Ser2. Ser2 carries the post-translational modification Phosphoserine. The segment covering 9 to 22 has biased composition (low complexity); sequence EAATVAAATEAGAE. Ser33 and Ser42 each carry phosphoserine.

Belongs to the zinc-containing alcohol dehydrogenase family. Quinone oxidoreductase subfamily.

Its subcellular location is the cytoplasm. The protein localises to the mitochondrion outer membrane. Plays a part in calcium-regulated keratinocyte activation in epidermal repair mechanisms. Has no effect on cell proliferation. Possesses ATPase activity. Negatively regulates mitochondrial fusion in cooperation with mitofusin proteins (MFN1-2). The chain is Synaptic vesicle membrane protein VAT-1 homolog (Vat1) from Mus musculus (Mouse).